Reading from the N-terminus, the 367-residue chain is Carbamoyl-phosphate synthase (367 aa).

One can recognise an ATP-grasp domain in the interval 111 to 296 (KEFYNEIGVP…SLCELVNMAA (186 aa)). 137-186 (KMEFPVVLKQGQGQGGKDIKVAESLDDVKEYFEEFDHALCEKFIEGSEIS) contacts ATP. Mg(2+) contacts are provided by aspartate 253, glutamate 267, and asparagine 269. Mn(2+) contacts are provided by aspartate 253, glutamate 267, and asparagine 269.

Belongs to the small carbamoyl-phosphate synthase family. As to quaternary structure, forms homodimers and homotetramers (dimers of dimers). Mg(2+) serves as cofactor. Requires Mn(2+) as cofactor.

The enzyme catalyses hydrogencarbonate + NH4(+) + 2 ATP = carbamoyl phosphate + 2 ADP + phosphate + 2 H(+). Functionally, catalyzes the synthesis of carbamoyl phosphate from ATP, ammonium and bicarbonate. Proceeds via a three-step mechanism, i.e. the phosphorylation of hydrogencarbonate to carboxyphosphate, a nucleophilic attack of ammonia on carboxyphosphate yielding carbamate, and the phosphorylation of carbamate forming carbamoyl phosphate. In M.smithii, the predominant archaeon in the human gut, one function of this enzyme may be to sequester ammonia, a scarce nutrient in the intestine which is the major source of nitrogen in M.smithii for the biosynthesis of nucleotides, amino acids, and many other metabolites. This is Carbamoyl-phosphate synthase from Methanobrevibacter smithii (strain ATCC 35061 / DSM 861 / OCM 144 / PS).